A 136-amino-acid chain; its full sequence is Histone H3 (136 aa).

Positions 1 to 43 (MARTKQTARKSTGGKAPRKQLATKAARKSAPASGGVKKPHRYR) are disordered. Residues lysine 5 and lysine 10 each carry the N6,N6,N6-trimethyllysine; alternate modification. N6,N6-dimethyllysine; alternate is present on residues lysine 5 and lysine 10. An N6-acetyllysine; alternate mark is found at lysine 5 and lysine 10. Lysine 5 carries the post-translational modification N6-methyllysine; alternate. Serine 11 bears the Phosphoserine mark. N6-acetyllysine is present on residues lysine 15 and lysine 24. At lysine 28 the chain carries N6,N6,N6-trimethyllysine; alternate. Residue lysine 28 is modified to N6,N6-dimethyllysine; alternate. Lysine 28 carries the N6-methyllysine; alternate modification. Serine 29 is subject to Phosphoserine. Lysine 37 carries the N6,N6,N6-trimethyllysine; alternate modification. Lysine 37 carries the post-translational modification N6,N6-dimethyllysine; alternate. Lysine 37 carries the N6-methyllysine; alternate modification. Lysine 80 bears the N6-methyllysine mark.

The protein belongs to the histone H3 family. In terms of assembly, the nucleosome is a histone octamer containing two molecules each of H2A, H2B, H3 and H4 assembled in one H3-H4 heterotetramer and two H2A-H2B heterodimers. The octamer wraps approximately 147 bp of DNA. Interacts (via N-terminal tail mono-acetylated on Lys-15) with swsn-4 (via Bromo domain); the interaction is direct. Post-translationally, phosphorylated at Ser-11 and Ser-29 during M phase. Phosphorylation of Ser-11 requires air-2 but not air-1. Dephosphorylated by gsp-1 and/or gsp-2 during chromosome segregation. Acetylation is generally linked to gene activation. In terms of processing, methylation at Lys-5 is linked to gene activation and is absent from male inactive X chromosome chromatin. Methylation at Lys-10 is linked to gene repression and is enriched in male inactive X chromosome chromatin. Methylation at Lys-37 occurs on the entire length of autosomes during meiotic prophase. Trimethylation at Lys-10 and Lys-37 is specifically antagonized by jmjd-2. Dimethylation and trimethylation at Lys-28 occurs in all nuclei. The mes-2-mes-3-mes-6 complex may be responsible for Lys-28 methylation in most of the germline and in the early embryo.

Its subcellular location is the nucleus. It localises to the chromosome. Its function is as follows. Core component of nucleosome. Nucleosomes wrap and compact DNA into chromatin, limiting DNA accessibility to the cellular machineries which require DNA as a template. Histones thereby play a central role in transcription regulation, DNA repair, DNA replication and chromosomal stability. DNA accessibility is regulated via a complex set of post-translational modifications of histones, also called histone code, and nucleosome remodeling. In Caenorhabditis elegans, this protein is Histone H3 (his-2).